The primary structure comprises 220 residues: Splicing factor U2AF 26 kDa subunit (220 aa).

An N-acetylalanine modification is found at Ala-2. The C3H1-type 1 zinc-finger motif lies at 12–40 (EKDKVNCSFYFKIGACRHGDRCSRLHNKP). Residues 65–147 (SHCHVSDVEV…QAVHAELSPV (83 aa)) enclose the RRM domain. The C3H1-type 2 zinc-finger motif lies at 149-176 (DFRESCCRQYEMGECTRGGFCNFMHLRP). A disordered region spans residues 186–220 (YGRGPRHRSPPRSHTGHRPRERNRRRSPDHRHGRF). The segment covering 189–220 (GPRHRSPPRSHTGHRPRERNRRRSPDHRHGRF) has biased composition (basic residues).

Belongs to the splicing factor SR family. Interacts with GFI1, U2AF2 and C1QBP. Isoform 3 interacts with PER1. In terms of processing, isoform 3 is rapidly degraded by a proteasome-mediated degradation pathway. Ubiquitous. Highly expressed in the brain.

It is found in the nucleus. Its subcellular location is the nucleus speckle. It localises to the cytoplasm. RNA-binding protein that function as a pre-mRNA splicing factor. Plays a critical role in both constitutive and enhancer-dependent splicing by mediating protein-protein interactions and protein-RNA interactions required for accurate 3'-splice site selection. It can functionally substitute for U2AF1 in constitutive splicing and enhancer-dependent splicing. Acts by enhancing the binding of U2AF2 to weak pyrimidine tracts. Also participates in the regulation of alternative pre-mRNA splicing. Activates exon 5 skipping of PTPRC during T-cell activation; an event reversed by GFI1. Binds to RNA at the AG dinucleotide at the 3'-splice site. Shows a preference for AGC or AGA. Alternative splicing of U2AF1L4 may play a role in connecting the circadian rhythm to changing external cues: may provide a circadian buffering system in central and periphery clocks that allows synchronized adaption to clock-resetting stimuli in order to prevent potentially pathogenic desynchronization. The sequence is that of Splicing factor U2AF 26 kDa subunit (U2af1l4) from Mus musculus (Mouse).